Reading from the N-terminus, the 197-residue chain is Large ribosomal subunit protein uL11 (197 aa).

It belongs to the universal ribosomal protein uL11 family. In terms of assembly, part of the ribosomal stalk of the 50S ribosomal subunit. Interacts with L10 and the large rRNA to form the base of the stalk. L10 forms an elongated spine to which L12 dimers bind in a sequential fashion forming a multimeric L10(L12)X complex. Post-translationally, one or more lysine residues are methylated.

In terms of biological role, forms part of the ribosomal stalk which helps the ribosome interact with GTP-bound translation factors. The chain is Large ribosomal subunit protein uL11 from Mycoplasma mobile (strain ATCC 43663 / 163K / NCTC 11711) (Mesomycoplasma mobile).